The chain runs to 1183 residues: DNA-directed RNA polymerase subunit beta (1183 aa).

Belongs to the RNA polymerase beta chain family. In terms of assembly, the RNAP catalytic core consists of 2 alpha, 1 beta, 1 beta' and 1 omega subunit. When a sigma factor is associated with the core the holoenzyme is formed, which can initiate transcription.

The enzyme catalyses RNA(n) + a ribonucleoside 5'-triphosphate = RNA(n+1) + diphosphate. Its function is as follows. DNA-dependent RNA polymerase catalyzes the transcription of DNA into RNA using the four ribonucleoside triphosphates as substrates. In Staphylococcus aureus (strain MRSA252), this protein is DNA-directed RNA polymerase subunit beta.